A 215-amino-acid chain; its full sequence is Vesicle-trafficking protein SEC22b (215 aa).

Topologically, residues 2 to 194 are cytoplasmic; that stretch reads VLLTMIARVA…KYLNMRSTYA (193 aa). Positions 6 to 119 constitute a Longin domain; it reads MIARVADGLP…YSFIEFDTFI (114 aa). Lys-38 carries the post-translational modification N6-acetyllysine. The v-SNARE coiled-coil homology domain occupies 134-194; the sequence is NLGSINTELQ…KYLNMRSTYA (61 aa). Residue Ser-137 is modified to Phosphoserine. At Thr-140 the chain carries Phosphothreonine. Phosphoserine occurs at positions 164, 168, 174, and 177. The helical; Anchor for type IV membrane protein transmembrane segment at 195-215 threads the bilayer; that stretch reads KLAAVAVFFIMLIVYVRFWWL.

It belongs to the synaptobrevin family. Interacts with STX17. Component of two distinct SNARE complexes consisting of STX5, GOSR2/BOS1, BET1 and SEC22B or STX18, USE1L, BNIP1/SEC20L and SEC22B. YKT6 can probably replace SEC22B in either complex. Interacts with the COPII Sec23/24 complex composed of SEC23A and SEC24A; recruits SEC22B into COPII-coated vesicles to allow its transport from the endoplasmic reticulum to the Golgi. Interacts with BET1.

The protein resides in the endoplasmic reticulum membrane. The protein localises to the endoplasmic reticulum-Golgi intermediate compartment membrane. It is found in the golgi apparatus. Its subcellular location is the cis-Golgi network membrane. It localises to the trans-Golgi network membrane. The protein resides in the melanosome. In terms of biological role, SNARE involved in targeting and fusion of ER-derived transport vesicles with the Golgi complex as well as Golgi-derived retrograde transport vesicles with the ER. This is Vesicle-trafficking protein SEC22b (SEC22B) from Homo sapiens (Human).